A 37-amino-acid chain; its full sequence is Large ribosomal subunit protein bL36B (37 aa).

The protein belongs to the bacterial ribosomal protein bL36 family.

This Aeromonas salmonicida (strain A449) protein is Large ribosomal subunit protein bL36B.